Reading from the N-terminus, the 343-residue chain is N-acetylornithine carbamoyltransferase (343 aa).

Carbamoyl phosphate contacts are provided by residues 49 to 52 (SMRT), tryptophan 77, and arginine 112. Glutamate 144 is a binding site for N(2)-acetyl-L-ornithine. 148-151 (HPCQ) lines the carbamoyl phosphate pocket. Residues lysine 252 and leucine 295 each coordinate N(2)-acetyl-L-ornithine. 294-295 (CL) provides a ligand contact to carbamoyl phosphate. Lysine 302 carries the post-translational modification N6-carboxylysine. Arginine 322 contributes to the carbamoyl phosphate binding site.

This sequence belongs to the aspartate/ornithine carbamoyltransferase superfamily. AOTCase family. In terms of assembly, homotrimer.

It is found in the cytoplasm. It carries out the reaction N(2)-acetyl-L-ornithine + carbamoyl phosphate = N(2)-acetyl-L-citrulline + phosphate + H(+). It functions in the pathway amino-acid biosynthesis; L-arginine biosynthesis. Its activity is regulated as follows. Carboxylation at Lys-302 increases the catalytic activity of the enzyme. Its function is as follows. Catalyzes the transfer of the carbamoyl group from carbamoyl phosphate to the delta-amino group of N(2)-acetyl-L-ornithine to produce N(2)-acetyl-L-citrulline. This is a step in an alternative arginine biosynthesis pathway. The enzyme has no activity with ornithine. The polypeptide is N-acetylornithine carbamoyltransferase (Xanthomonas axonopodis pv. citri (strain 306)).